The chain runs to 403 residues: Dual-specificity RNA methyltransferase RlmN (403 aa).

The active-site Proton acceptor is Glu126. The Radical SAM core domain occupies Glu132–Leu375. Cys139 and Cys378 are disulfide-bonded. Positions 146, 150, and 153 each coordinate [4Fe-4S] cluster. S-adenosyl-L-methionine is bound by residues Gly204–Glu205, Ser236, Ser258–His260, and Asn335. Cys378 serves as the catalytic S-methylcysteine intermediate.

The protein belongs to the radical SAM superfamily. RlmN family. The cofactor is [4Fe-4S] cluster.

Its subcellular location is the cytoplasm. The catalysed reaction is adenosine(2503) in 23S rRNA + 2 reduced [2Fe-2S]-[ferredoxin] + 2 S-adenosyl-L-methionine = 2-methyladenosine(2503) in 23S rRNA + 5'-deoxyadenosine + L-methionine + 2 oxidized [2Fe-2S]-[ferredoxin] + S-adenosyl-L-homocysteine. The enzyme catalyses adenosine(37) in tRNA + 2 reduced [2Fe-2S]-[ferredoxin] + 2 S-adenosyl-L-methionine = 2-methyladenosine(37) in tRNA + 5'-deoxyadenosine + L-methionine + 2 oxidized [2Fe-2S]-[ferredoxin] + S-adenosyl-L-homocysteine. Its function is as follows. Specifically methylates position 2 of adenine 2503 in 23S rRNA and position 2 of adenine 37 in tRNAs. m2A2503 modification seems to play a crucial role in the proofreading step occurring at the peptidyl transferase center and thus would serve to optimize ribosomal fidelity. The protein is Dual-specificity RNA methyltransferase RlmN of Bradyrhizobium sp. (strain ORS 278).